The chain runs to 282 residues: ATP phosphoribosyltransferase (282 aa).

Belongs to the ATP phosphoribosyltransferase family. Long subfamily. It depends on Mg(2+) as a cofactor.

Its subcellular location is the cytoplasm. It carries out the reaction 1-(5-phospho-beta-D-ribosyl)-ATP + diphosphate = 5-phospho-alpha-D-ribose 1-diphosphate + ATP. The protein operates within amino-acid biosynthesis; L-histidine biosynthesis; L-histidine from 5-phospho-alpha-D-ribose 1-diphosphate: step 1/9. Feedback inhibited by histidine. In terms of biological role, catalyzes the condensation of ATP and 5-phosphoribose 1-diphosphate to form N'-(5'-phosphoribosyl)-ATP (PR-ATP). Has a crucial role in the pathway because the rate of histidine biosynthesis seems to be controlled primarily by regulation of HisG enzymatic activity. This is ATP phosphoribosyltransferase from Pyrobaculum islandicum (strain DSM 4184 / JCM 9189 / GEO3).